A 168-amino-acid chain; its full sequence is Sperm acrosome-associated protein 9 (168 aa).

As to quaternary structure, microtubule inner protein component of sperm flagellar doublet microtubules. Interacts with CABP1 and CALR. Interacts with INCA1. Interacts with microtubules. In terms of tissue distribution, testis-specific. Expressed in round spermatids.

The protein resides in the cytoplasm. It localises to the cytoplasmic vesicle. It is found in the secretory vesicle. The protein localises to the acrosome. Its subcellular location is the cytoskeleton. The protein resides in the cilium basal body. It localises to the flagellum axoneme. It is found in the cilium axoneme. The protein localises to the nucleus. Its function is as follows. Microtubule inner protein (MIP) part of the dynein-decorated doublet microtubules (DMTs) of multiciliated respiratory cells and the distal singlet microtubules of monoflagellated spermatozoa. Forms an extensive interaction network cross-linking the lumen of axonemal doublet microtubules. This is Sperm acrosome-associated protein 9 (Spaca9) from Rattus norvegicus (Rat).